Here is a 948-residue protein sequence, read N- to C-terminus: Coatomer subunit beta-2 (948 aa).

HEAT repeat units lie at residues 49-87 (ETIP…TDSK), 92-126 (PEMI…MKET), 127-164 (EIVE…LPHG), 274-311 (TAIR…TLHR), 312-349 (DIMV…HHNI), and 391-428 (EVAS…TNPK).

Oligomeric complex that consists of at least the alpha, beta, beta', gamma, delta, epsilon and zeta subunits.

Its subcellular location is the cytoplasm. It is found in the golgi apparatus membrane. The protein resides in the cytoplasmic vesicle. The protein localises to the COPI-coated vesicle membrane. In terms of biological role, the coatomer is a cytosolic protein complex that binds to dilysine motifs and reversibly associates with Golgi non-clathrin-coated vesicles, which further mediate biosynthetic protein transport from the ER, via the Golgi up to the trans Golgi network. Coatomer complex is required for budding from Golgi membranes, and is essential for the retrograde Golgi-to-ER transport of dilysine-tagged proteins. This chain is Coatomer subunit beta-2, found in Arabidopsis thaliana (Mouse-ear cress).